Consider the following 105-residue polypeptide: U21-theraphotoxin-Cg1a 4 (105 aa).

Residues 1 to 21 form the signal peptide; the sequence is MKVSVLITLAVLGVMFLLTSA. A propeptide spanning residues 22 to 48 is cleaved from the precursor; that stretch reads EERGSDQMDSPAWLKSMEIIFQSEERE. Disulfide bonds link Cys-49/Cys-63, Cys-56/Cys-68, and Cys-62/Cys-76. Val-82 carries the post-translational modification Valine amide. Residues 83–105 constitute a propeptide that is removed on maturation; sequence GKWEMLINMNIFRIVFSYSMCTV.

This sequence belongs to the neurotoxin 10 (Hwtx-1) family. 05 (F4a) subfamily. In terms of tissue distribution, expressed by the venom gland.

It is found in the secreted. Probable ion channel inhibitor. The sequence is that of U21-theraphotoxin-Cg1a 4 from Chilobrachys guangxiensis (Chinese earth tiger tarantula).